We begin with the raw amino-acid sequence, 361 residues long: Chorismate synthase (361 aa).

The tract at residues 37–59 is disordered; sequence TEADLQHDLDRRRPGTSRYTTQR. Residues 40–49 are compositionally biased toward basic and acidic residues; that stretch reads DLQHDLDRRR. NADP(+) contacts are provided by Arg48 and Arg54. Residues 125–127, 238–239, Gly278, 293–297, and Arg319 contribute to the FMN site; these read RSS, NA, and KPTSS.

It belongs to the chorismate synthase family. In terms of assembly, homotetramer. The cofactor is FMNH2.

It catalyses the reaction 5-O-(1-carboxyvinyl)-3-phosphoshikimate = chorismate + phosphate. It functions in the pathway metabolic intermediate biosynthesis; chorismate biosynthesis; chorismate from D-erythrose 4-phosphate and phosphoenolpyruvate: step 7/7. Catalyzes the anti-1,4-elimination of the C-3 phosphate and the C-6 proR hydrogen from 5-enolpyruvylshikimate-3-phosphate (EPSP) to yield chorismate, which is the branch point compound that serves as the starting substrate for the three terminal pathways of aromatic amino acid biosynthesis. This reaction introduces a second double bond into the aromatic ring system. The protein is Chorismate synthase of Serratia proteamaculans (strain 568).